A 145-amino-acid polypeptide reads, in one-letter code: LIM domain only protein 3 (145 aa).

LIM zinc-binding domains are found at residues 11–73 and 75–137; these read KGCA…LFGT and GNCA…GLMK.

This Rattus norvegicus (Rat) protein is LIM domain only protein 3 (Lmo3).